Consider the following 796-residue polypeptide: YY1-associated protein 1 (796 aa).

Disordered stretches follow at residues 1–45 and 463–488; these read MEEE…ATPS and IQPS…SEAP. Positions 23-36 are enriched in basic and acidic residues; the sequence is PPDKREGSAVDPGK. Positions 463 to 472 are enriched in low complexity; the sequence is IQPSPSLQPS. Residues 473-485 show a composition bias toward polar residues; that stretch reads FNPGKTPAQSTHS. Ser724 carries the post-translational modification Phosphoserine. Residues 755–776 form a disordered region; that stretch reads RQALEPLPQGIQESLNNSSPGD. The segment covering 765 to 774 has biased composition (polar residues); sequence IQESLNNSSP.

As to quaternary structure, interacts with YY1. Interacts with MAD2L2. Interacts with INO80. Ubiquitous. Detected in small intestine, skeletal muscle, lung, pancreas, brain, stomach, spleen, colon and heart. Detected at very low levels in healthy liver. Highly expressed in most liver carcinomas.

The protein localises to the cytoplasm. It localises to the nucleus. Its subcellular location is the nucleoplasm. It is found in the nucleolus. Functionally, associates with the INO80 chromatin remodeling complex, which is responsible for transcriptional regulation, DNA repair, and replication. Enhances transcription activation by YY1. Plays a role in cell cycle regulation. The chain is YY1-associated protein 1 from Homo sapiens (Human).